The chain runs to 145 residues: Basic leucine zipper 1 (145 aa).

The span at 1-11 (MANAEKTSSGS) shows a compositional bias: polar residues. Positions 1 to 39 (MANAEKTSSGSDIDEKKRKRKLSNRESARRSRLKKQKLM) are disordered. In terms of domain architecture, bZIP spans 14-77 (DEKKRKRKLS…DSVETENAGL (64 aa)). Positions 16–37 (KKRKRKLSNRESARRSRLKKQK) are basic motif. A leucine-zipper region spans residues 46–53 (ISSLERRI).

This sequence belongs to the bZIP family. As to quaternary structure, interacts with ZFP7, BZIP4, BZIP9, BZIP10, BZIP11, BZIP25, BZIP42, BZIP44, BZIP53, BZIP58 and BZIP63. Expressed in both shoots, including young leaves, stipulae and trichomes (except in cotyledons and hypocotyl), and roots, including vascular tissues (e.g. in both the phloem and the xylem). Present in seeds and pollen. Restricted to vasculatures and roots in the presence of sucrose or glucose.

The protein resides in the nucleus. In terms of biological role, transcription factor that binds to the C-box-like motif (5'-TGCTGACGTCA-3') and G-box-like motif (5'-CCACGTGGCC-3'), ABRE elements, of gene promoters involved in sugar signaling. Activated by low energy stress both at transcriptional and post-transcriptional mechanisms. Promotes dark-induced senescence and participates in the transcriptional reprogramming of amino acid metabolism during the dark-induced starvation response. Transcription activator of the mannan synthase CSLA9. Recognizes and binds to DNA-specific sequence of CSLA9 promoter. In Arabidopsis thaliana (Mouse-ear cress), this protein is Basic leucine zipper 1 (BZIP1).